The chain runs to 545 residues: Capsular polysaccharide phosphotransferase SacB (545 aa).

Belongs to the stealth family.

May be the polymerase that links individual UDP-N-acetyl-D-mannosamine monomers. In serotype A the capsule is composed of repeated units of (alpha 1-6)-linked N-acetyl-D-mannosamine-1-phosphate. This Neisseria meningitidis serogroup A protein is Capsular polysaccharide phosphotransferase SacB (sacB).